The sequence spans 207 residues: uncharacterized protein (207 aa).

This is an uncharacterized protein from Frog virus 3 (isolate Goorha) (FV-3).